The chain runs to 258 residues: Methylthioribulose-1-phosphate dehydratase (258 aa).

Positions 1–20 (MTPPSNGQAAETNDHLVQSD) are enriched in polar residues. Residues 1–21 (MTPPSNGQAAETNDHLVQSDN) form a disordered region. Cys105 serves as a coordination point for substrate. Zn(2+) contacts are provided by His123 and His125. The active-site Proton donor/acceptor is Glu153. Residue His210 participates in Zn(2+) binding.

The protein belongs to the aldolase class II family. MtnB subfamily. Zn(2+) is required as a cofactor.

It is found in the cytoplasm. The catalysed reaction is 5-(methylsulfanyl)-D-ribulose 1-phosphate = 5-methylsulfanyl-2,3-dioxopentyl phosphate + H2O. Its pathway is amino-acid biosynthesis; L-methionine biosynthesis via salvage pathway; L-methionine from S-methyl-5-thio-alpha-D-ribose 1-phosphate: step 2/6. Functionally, catalyzes the dehydration of methylthioribulose-1-phosphate (MTRu-1-P) into 2,3-diketo-5-methylthiopentyl-1-phosphate (DK-MTP-1-P). The protein is Methylthioribulose-1-phosphate dehydratase of Chaetomium globosum (strain ATCC 6205 / CBS 148.51 / DSM 1962 / NBRC 6347 / NRRL 1970) (Soil fungus).